Here is a 376-residue protein sequence, read N- to C-terminus: MKVLTVFGTRPEAIKMAPLVHALAKDPFFEAKVCVTAQHREMLDQVLKLFSIVPDYDLNIMQPGQGLTEITCRILEGLKPILAEFKPDVVLVHGDTTTTLATSLAAFYQRIPVGHVEAGLRTGDLYSPWPEEANRTLTGHLAMYHFSPTETSRQNLLRENVADSRIFITGNTVIDALLWVRDQVMSSDKLRSELAANYPFIDPDKKMILVTGHRRESFGRGFEEICHALADIATTHQDIQIVYPVHLNPNVREPVNRILGHVKNVILIDPQEYLPFVWLMNHAWLILTDSGGIQEEAPSLGKPVLVMRDTTERPEAVTAGTVRLVGTDKQRIVEEVTRLLKDENEYQAMSRAHNPYGDGQACSRILEALKNNRISL.

Residues R10, K15, D95, E117, H213, Q271, F276, 290–292, E296, and R313 each bind substrate; that span reads SGG.

This sequence belongs to the UDP-N-acetylglucosamine 2-epimerase family. In terms of assembly, homodimer.

It localises to the cytoplasm. The enzyme catalyses UDP-N-acetyl-alpha-D-glucosamine = UDP-N-acetyl-alpha-D-mannosamine. It participates in bacterial outer membrane biogenesis; enterobacterial common antigen biosynthesis. Allosterically activated by its substrate, UDP-GlcNAc. Catalyzes the reversible epimerization at C-2 of UDP-N-acetylglucosamine (UDP-GlcNAc) and thereby provides bacteria with UDP-N-acetylmannosamine (UDP-ManNAc), the activated donor of ManNAc residues. Also involved in bacteriophage N4 adsorption. The sequence is that of UDP-N-acetylglucosamine 2-epimerase from Escherichia coli (strain K12).